A 153-amino-acid chain; its full sequence is Cofilin (153 aa).

The 145-residue stretch at 4–148 (SGATVSQDCI…EYDSILKTVS (145 aa)) folds into the ADF-H domain.

Belongs to the actin-binding proteins ADF family.

The protein localises to the cytoplasm. The protein resides in the cytoskeleton. Its subcellular location is the nucleus matrix. Functionally, controls reversibly actin polymerization and depolymerization in a pH-sensitive manner. It has the ability to bind G- and F-actin in a 1:1 ratio of cofilin to actin. Binding to F-actin is regulated by tropomyosin. It is the major component of intranuclear and cytoplasmic actin rods. Required for accumulation of actin at the cell division site via depolymerizing actin at the cell ends. In association with myosin II has a role in the assembly of the contractile ring via severing actin filaments. Involved in the maintenance of the contractile ring once formed. In association with profilin and capping protein, has a role in the mitotic reorganization of the actin cytoskeleton. The sequence is that of Cofilin (COF1) from Gibberella zeae (strain ATCC MYA-4620 / CBS 123657 / FGSC 9075 / NRRL 31084 / PH-1) (Wheat head blight fungus).